A 336-amino-acid chain; its full sequence is E3 ubiquitin-protein ligase RING2 (336 aa).

Positions 2–179 (TQTVQTNGVQ…AEDNGDSSHC (178 aa)) are interaction with HIP2. Residues 51–91 (CPICLDMLKNTMTTKECLHRFCADCIITALRSGNKECPTCR) form an RING-type zinc finger. Residues 93 to 98 (KLVSKR) are interaction with nucleosomes via an acidic patch on histone H2A and histone H2B. The interval 158–218 (RGKKHQIENG…NATENGGGDI (61 aa)) is disordered. Polar residues predominate over residues 176–190 (SSHCSNASVHSNQEA).

As to quaternary structure, component of chromatin-associated Polycomb (PcG) complexes. Component of a PRC1-like complex. Component of some MLL1/MLL complex.

It is found in the nucleus. Its subcellular location is the cytoplasm. It localises to the chromosome. The catalysed reaction is S-ubiquitinyl-[E2 ubiquitin-conjugating enzyme]-L-cysteine + [acceptor protein]-L-lysine = [E2 ubiquitin-conjugating enzyme]-L-cysteine + N(6)-ubiquitinyl-[acceptor protein]-L-lysine.. It functions in the pathway protein modification; protein ubiquitination. Its function is as follows. E3 ubiquitin-protein ligase that mediates monoubiquitination of 'Lys-119' of histone H2A (H2AK119Ub), thereby playing a central role in histone code and gene regulation. H2AK119Ub gives a specific tag for epigenetic transcriptional repression. Essential component of a Polycomb group (PcG) multiprotein PRC1-like complex, a complex class required to maintain the transcriptionally repressive state of many genes, including Hox genes, throughout development. PcG PRC1 complex acts via chromatin remodeling and modification of histones, rendering chromatin heritably changed in its expressibility. This is E3 ubiquitin-protein ligase RING2 (rnf2) from Danio rerio (Zebrafish).